A 167-amino-acid polypeptide reads, in one-letter code: NAD(P)H-quinone oxidoreductase subunit I, chloroplastic (167 aa).

2 4Fe-4S ferredoxin-type domains span residues 55-84 (GRIHFEFDKCIACEVCVRVCPIDLPVVDWK) and 95-124 (LNYSIDFGICIFCGNCVEYCPTNCLSMTEE). C64, C67, C70, C74, C104, C107, C110, and C114 together coordinate [4Fe-4S] cluster.

This sequence belongs to the complex I 23 kDa subunit family. NDH is composed of at least 16 different subunits, 5 of which are encoded in the nucleus. Requires [4Fe-4S] cluster as cofactor.

Its subcellular location is the plastid. The protein localises to the chloroplast thylakoid membrane. The catalysed reaction is a plastoquinone + NADH + (n+1) H(+)(in) = a plastoquinol + NAD(+) + n H(+)(out). The enzyme catalyses a plastoquinone + NADPH + (n+1) H(+)(in) = a plastoquinol + NADP(+) + n H(+)(out). NDH shuttles electrons from NAD(P)H:plastoquinone, via FMN and iron-sulfur (Fe-S) centers, to quinones in the photosynthetic chain and possibly in a chloroplast respiratory chain. The immediate electron acceptor for the enzyme in this species is believed to be plastoquinone. Couples the redox reaction to proton translocation, and thus conserves the redox energy in a proton gradient. In Barbarea verna (Land cress), this protein is NAD(P)H-quinone oxidoreductase subunit I, chloroplastic.